The sequence spans 243 residues: Adenosine 5'-phosphosulfate reductase (243 aa).

Belongs to the PAPS reductase family. CysH subfamily. The cofactor is [4Fe-4S] cluster.

It localises to the cytoplasm. It catalyses the reaction [thioredoxin]-disulfide + sulfite + AMP + 2 H(+) = adenosine 5'-phosphosulfate + [thioredoxin]-dithiol. The protein operates within sulfur metabolism; hydrogen sulfide biosynthesis; sulfite from sulfate. Catalyzes the formation of sulfite from adenosine 5'-phosphosulfate (APS) using thioredoxin as an electron donor. In Staphylococcus haemolyticus (strain JCSC1435), this protein is Adenosine 5'-phosphosulfate reductase.